The following is a 507-amino-acid chain: RNA-splicing ligase RtcB homolog (507 aa).

The Mn(2+) site is built by Asp121, Cys124, His229, His261, and His355. 228-232 serves as a coordination point for GMP; that stretch reads NHYAE. Residues 355–356, 404–407, Ser411, 430–433, and Lys506 each bind GMP; these read HN, GGTM, and HGAG. His430 functions as the GMP-histidine intermediate in the catalytic mechanism.

This sequence belongs to the RtcB family. Catalytic component of the tRNA-splicing ligase complex. Mn(2+) serves as cofactor.

The catalysed reaction is a 3'-end 3'-phospho-ribonucleotide-RNA + a 5'-end dephospho-ribonucleoside-RNA + GTP = a ribonucleotidyl-ribonucleotide-RNA + GMP + diphosphate. It carries out the reaction a 3'-end 2',3'-cyclophospho-ribonucleotide-RNA + a 5'-end dephospho-ribonucleoside-RNA + GTP + H2O = a ribonucleotidyl-ribonucleotide-RNA + GMP + diphosphate + H(+). In terms of biological role, catalytic subunit of the tRNA-splicing ligase complex that acts by directly joining spliced tRNA halves to mature-sized tRNAs by incorporating the precursor-derived splice junction phosphate into the mature tRNA as a canonical 3',5'-phosphodiester. May act as an RNA ligase with broad substrate specificity, and may function toward other RNAs. This is RNA-splicing ligase RtcB homolog from Micromonas pusilla (strain CCMP1545) (Picoplanktonic green alga).